A 264-amino-acid chain; its full sequence is Apolipoprotein A-I (264 aa).

The N-terminal stretch at 1–18 (MKAVVLAVAVLFLTGSQA) is a signal peptide. 2 consecutive repeat copies span residues 67-88 (LKLL…ADLG) and 89-110 (PVTQ…QEMN). The segment at 67-264 (LKLLDNWDTL…DQATKQLTAQ (198 aa)) is 10 X approximate tandem repeats. Residue Met109 is modified to Methionine sulfoxide. Residues 111–121 (KDLQEVKQKVQ) form a 3; half-length repeat. 5 tandem repeats follow at residues 122–143 (PYLD…EKVG), 144–165 (PLGT…EKLT), 166–187 (PLGE…TQLA), 188–207 (PYSD…LRDS), and 208–229 (TTFA…EKAK). The 9; half-length repeat unit spans residues 230-240 (PALEDLRQGLL). Copy 10 of the repeat occupies 241–264 (PVLESLKASILSSIDQATKQLTAQ).

Belongs to the apolipoprotein A1/A4/E family. In terms of assembly, homodimer. Interacts with APOA1BP and CLU. Component of a sperm activating protein complex (SPAP), consisting of APOA1, an immunoglobulin heavy chain, an immunoglobulin light chain and albumin. Interacts with NDRG1. Interacts with SCGB3A2. Interacts with NAXE and YJEFN3. Glycosylated. Post-translationally, palmitoylated. In terms of processing, phosphorylation sites are present in the extracellular medium.

The protein localises to the secreted. In terms of biological role, participates in the reverse transport of cholesterol from tissues to the liver for excretion by promoting cholesterol efflux from tissues and by acting as a cofactor for the lecithin cholesterol acyltransferase (LCAT). As part of the SPAP complex, activates spermatozoa motility. The protein is Apolipoprotein A-I (APOA1) of Chinchilla lanigera (Long-tailed chinchilla).